Consider the following 507-residue polypeptide: Maturase K (507 aa).

The protein belongs to the intron maturase 2 family. MatK subfamily.

It is found in the plastid. The protein resides in the chloroplast. In terms of biological role, usually encoded in the trnK tRNA gene intron. Probably assists in splicing its own and other chloroplast group II introns. This chain is Maturase K, found in Umbellularia californica (California bay laurel).